Consider the following 228-residue polypeptide: MDTMRQRILVVDDDPSLAEMLTIVLRGEGFDTAVIGDGSQALTAVRELRPDLVLLDLMLPGMNGIDVCRVLRADSGVPIVMLTAKTDTVDVVLGLESGADDYVMKPFKPKELVARVRARLRRNEDEPAEMLSIGDVEIDVPAHKVTRQGEQISLTPLEFDLLVALARKPRQVFTRDVLLEQVWGYRHPADTRLVNVHVQRLRAKVEKDPENPQVVLTVRGVGYKAGPP.

The Response regulatory domain maps to 7 to 120 (RILVVDDDPS…ELVARVRARL (114 aa)). 4-aspartylphosphate is present on Asp56. The ompR/PhoB-type DNA-binding region spans 128–227 (AEMLSIGDVE…VRGVGYKAGP (100 aa)).

Probably a monomer when inactive, phosphorylation may permit it to oligomerize. The monomeric form does not seem to be phosphorylated. In terms of processing, phosphorylated by MtrB.

The protein localises to the cytoplasm. Functionally, member of the two-component regulatory system MtrA/MtrB, responding to environmental signals. Controls expression of a number of genes including dnaA, ripA, fbpB and probably itself. Probably plays a role in cell division. This chain is DNA-binding response regulator MtrA (mtrA), found in Mycolicibacterium smegmatis (strain ATCC 700084 / mc(2)155) (Mycobacterium smegmatis).